Consider the following 123-residue polypeptide: UPF0102 protein PputGB1_4524 (123 aa).

It belongs to the UPF0102 family.

This is UPF0102 protein PputGB1_4524 from Pseudomonas putida (strain GB-1).